A 56-amino-acid polypeptide reads, in one-letter code: UPF0391 membrane protein Noc_0482 (56 aa).

A run of 2 helical transmembrane segments spans residues 1–21 and 29–49; these read MFGW…FGFT and HIAW…LLLG.

This sequence belongs to the UPF0391 family.

The protein resides in the cell membrane. This chain is UPF0391 membrane protein Noc_0482, found in Nitrosococcus oceani (strain ATCC 19707 / BCRC 17464 / JCM 30415 / NCIMB 11848 / C-107).